Reading from the N-terminus, the 615-residue chain is DNA mismatch repair protein MutL (615 aa).

Positions 363–397 (FAEPAVREPVAPRYTPAPASGSRPAAPWPNAQPGY) are disordered. The span at 378-391 (PAPASGSRPAAPWP) shows a compositional bias: low complexity.

Belongs to the DNA mismatch repair MutL/HexB family.

Functionally, this protein is involved in the repair of mismatches in DNA. It is required for dam-dependent methyl-directed DNA mismatch repair. May act as a 'molecular matchmaker', a protein that promotes the formation of a stable complex between two or more DNA-binding proteins in an ATP-dependent manner without itself being part of a final effector complex. This chain is DNA mismatch repair protein MutL, found in Escherichia coli O157:H7.